The following is an 810-amino-acid chain: LPS-assembly protein LptD (810 aa).

An N-terminal signal peptide occupies residues 1–29 (MTKWTLGYSYPIALTISLIPALTPAIVQA).

The protein belongs to the LptD family. In terms of assembly, component of the lipopolysaccharide transport and assembly complex. Interacts with LptE and LptA.

The protein resides in the cell outer membrane. Functionally, together with LptE, is involved in the assembly of lipopolysaccharide (LPS) at the surface of the outer membrane. The sequence is that of LPS-assembly protein LptD from Aeromonas salmonicida (strain A449).